Consider the following 762-residue polypeptide: 5-methyltetrahydropteroyltriglutamate--homocysteine methyltransferase (762 aa).

5-methyltetrahydropteroyltri-L-glutamate contacts are provided by residues 17-20 (REWK) and Lys-111. Residues 435–437 (IGS) and Glu-488 contribute to the L-homocysteine site. Residues 435–437 (IGS) and Glu-488 each bind L-methionine. Residues 519–520 (RC) and Trp-565 contribute to the 5-methyltetrahydropteroyltri-L-glutamate site. An L-homocysteine-binding site is contributed by Asp-603. Residue Asp-603 participates in L-methionine binding. Glu-609 contributes to the 5-methyltetrahydropteroyltri-L-glutamate binding site. Zn(2+) contacts are provided by His-645, Cys-647, and Glu-669. The active-site Proton donor is His-698. Zn(2+) is bound at residue Cys-730.

It belongs to the vitamin-B12 independent methionine synthase family. It depends on Zn(2+) as a cofactor.

The enzyme catalyses 5-methyltetrahydropteroyltri-L-glutamate + L-homocysteine = tetrahydropteroyltri-L-glutamate + L-methionine. It functions in the pathway amino-acid biosynthesis; L-methionine biosynthesis via de novo pathway; L-methionine from L-homocysteine (MetE route): step 1/1. Functionally, catalyzes the transfer of a methyl group from 5-methyltetrahydrofolate to homocysteine resulting in methionine formation. The sequence is that of 5-methyltetrahydropteroyltriglutamate--homocysteine methyltransferase from Bacillus mycoides (strain KBAB4) (Bacillus weihenstephanensis).